The chain runs to 226 residues: tRNA (guanine-N(7)-)-methyltransferase (226 aa).

The segment at methionine 1 to proline 21 is disordered. Residues glutamate 59, glutamate 84, aspartate 111, and aspartate 133 each contribute to the S-adenosyl-L-methionine site. Aspartate 133 is an active-site residue. Lysine 137 contacts substrate. Residues arginine 139–arginine 144 form an interaction with RNA region. Residues aspartate 169 and threonine 206 to glutamate 209 each bind substrate.

This sequence belongs to the class I-like SAM-binding methyltransferase superfamily. TrmB family.

The catalysed reaction is guanosine(46) in tRNA + S-adenosyl-L-methionine = N(7)-methylguanosine(46) in tRNA + S-adenosyl-L-homocysteine. The protein operates within tRNA modification; N(7)-methylguanine-tRNA biosynthesis. Its function is as follows. Catalyzes the formation of N(7)-methylguanine at position 46 (m7G46) in tRNA. In Caulobacter sp. (strain K31), this protein is tRNA (guanine-N(7)-)-methyltransferase.